The following is a 70-amino-acid chain: MPDQRQQERSRRKQGEPSPLPTPTRHDPPPSEQESPVRRMLRDLRERDPGQEAEEEAAQRRQQRREQSGE.

2 stretches are compositionally biased toward basic and acidic residues: residues 1–15 and 24–50; these read MPDQ…RKQG and TRHD…RDPG. Positions 1–70 are disordered; that stretch reads MPDQRQQERS…RQQRREQSGE (70 aa). Glu70 is covalently cross-linked (Isoglutamyl lysine isopeptide (Glu-Lys) (interchain with K-? in acceptor proteins)).

It belongs to the ubiquitin-like protein UBact family.

In terms of biological role, may function as a protein modifier covalently attached to lysine residues of substrate proteins. This may serve to target the modified proteins for degradation by proteasomes. This is Prokaryotic ubiquitin-like protein UBact from Terrybacteria sp. (strain RIFCSPHIGHO2_01_FULL_58_15).